The primary structure comprises 112 residues: Large ribosomal subunit protein P1w (112 aa).

Positions 85 to 112 (AAAPAAEEKKKDEPAEESDGDLGFGLFD) are disordered. A Phosphoserine modification is found at Ser-102.

It belongs to the eukaryotic ribosomal protein P1/P2 family. As to quaternary structure, P1 and P2 exist as dimers at the large ribosomal subunit.

In terms of biological role, plays an important role in the elongation step of protein synthesis. This chain is Large ribosomal subunit protein P1w (RPP1A), found in Arabidopsis thaliana (Mouse-ear cress).